The following is an 879-amino-acid chain: Phosphoenolpyruvate carboxylase (879 aa).

Catalysis depends on residues His-138 and Lys-545.

Belongs to the PEPCase type 1 family. Requires Mg(2+) as cofactor.

The catalysed reaction is oxaloacetate + phosphate = phosphoenolpyruvate + hydrogencarbonate. Functionally, forms oxaloacetate, a four-carbon dicarboxylic acid source for the tricarboxylic acid cycle. This Histophilus somni (strain 2336) (Haemophilus somnus) protein is Phosphoenolpyruvate carboxylase.